Here is a 207-residue protein sequence, read N- to C-terminus: ATP synthase subunit b 2 (207 aa).

The segment covering 1-31 has biased composition (low complexity); that stretch reads MVAQAAPPAGTAGQGTHEAASAAHGAAAAHG. The disordered stretch occupies residues 1–41; sequence MVAQAAPPAGTAGQGTHEAASAAHGAAAAHGAAEEGHGKKS. A helical membrane pass occupies residues 48-70; that stretch reads ATTFASQLLWLVLSFGLLYLLMS.

The protein belongs to the ATPase B chain family. As to quaternary structure, F-type ATPases have 2 components, F(1) - the catalytic core - and F(0) - the membrane proton channel. F(1) has five subunits: alpha(3), beta(3), gamma(1), delta(1), epsilon(1). F(0) has three main subunits: a(1), b(2) and c(10-14). The alpha and beta chains form an alternating ring which encloses part of the gamma chain. F(1) is attached to F(0) by a central stalk formed by the gamma and epsilon chains, while a peripheral stalk is formed by the delta and b chains.

It localises to the cell inner membrane. F(1)F(0) ATP synthase produces ATP from ADP in the presence of a proton or sodium gradient. F-type ATPases consist of two structural domains, F(1) containing the extramembraneous catalytic core and F(0) containing the membrane proton channel, linked together by a central stalk and a peripheral stalk. During catalysis, ATP synthesis in the catalytic domain of F(1) is coupled via a rotary mechanism of the central stalk subunits to proton translocation. Functionally, component of the F(0) channel, it forms part of the peripheral stalk, linking F(1) to F(0). The polypeptide is ATP synthase subunit b 2 (Xanthobacter autotrophicus (strain ATCC BAA-1158 / Py2)).